The sequence spans 149 residues: Arginine regulator (149 aa).

This sequence belongs to the ArgR family.

It localises to the cytoplasm. The protein operates within amino-acid degradation; L-arginine degradation via ADI pathway. In terms of biological role, regulates the transcription of the arc operon, involved in arginine catabolism. This chain is Arginine regulator (argR1), found in Bacillus cereus (strain ATCC 14579 / DSM 31 / CCUG 7414 / JCM 2152 / NBRC 15305 / NCIMB 9373 / NCTC 2599 / NRRL B-3711).